The primary structure comprises 193 residues: Urease accessory protein UreE (193 aa).

The disordered stretch occupies residues 138 to 193 (RGAYHSHGAHSHDQGHAAHDHGNEHKHDHGHDHVHGPGCDHDHDHDHGHHHDHKHD). Basic and acidic residues predominate over residues 147–193 (HSHDQGHAAHDHGNEHKHDHGHDHVHGPGCDHDHDHDHGHHHDHKHD).

Belongs to the UreE family.

The protein resides in the cytoplasm. In terms of biological role, involved in urease metallocenter assembly. Binds nickel. Probably functions as a nickel donor during metallocenter assembly. The protein is Urease accessory protein UreE of Rhizobium leguminosarum bv. trifolii (strain WSM2304).